Reading from the N-terminus, the 313-residue chain is Olfactory receptor 2B6 (313 aa).

At 1 to 25 (MNWVNDSIIQEFILLGFSDRPWLEF) the chain is on the extracellular side. N-linked (GlcNAc...) asparagine glycosylation is present at Asn-5. The helical transmembrane segment at 26–49 (PLLVVFLISYTVTIFGNLTIILVS) threads the bilayer. At 50 to 57 (RLDTKLHT) the chain is on the cytoplasmic side. The chain crosses the membrane as a helical span at residues 58 to 79 (PMYFFLTNLSLLDLCYTTCTVP). The Extracellular segment spans residues 80–100 (QMLVNLCSIRKVISYRGCVAQ). The cysteines at positions 97 and 189 are disulfide-linked. The chain crosses the membrane as a helical span at residues 101-120 (LFIFLALGATEYLLLAVMSF). Over 121-139 (DRFVAICRPLHYSVIMHQR) the chain is Cytoplasmic. Residues 140-158 (LCLQLAAASWVTGFSNSVW) traverse the membrane as a helical segment. At 159–195 (LSTLTLQLPLCDPYVIDHFLCEVPALLKLSCVETTAN) the chain is on the extracellular side. The chain crosses the membrane as a helical span at residues 196–219 (EAELFLVSELFHLIPLTLILISYA). Residues 220 to 236 (FIVRAVLRIQSAEGRQK) lie on the Cytoplasmic side of the membrane. Residues 237–259 (AFGTCGSHLIVVSLFYSTAVSVY) form a helical membrane-spanning segment. The Extracellular portion of the chain corresponds to 260 to 272 (LQPPSPSSKDQGK). Residues 273–292 (MVSLFYGIIAPMLNPLIYTL) form a helical membrane-spanning segment. The Cytoplasmic segment spans residues 293-313 (RNKEVKEGFKRLVARVFLIKK).

The protein belongs to the G-protein coupled receptor 1 family.

It is found in the cell membrane. In terms of biological role, odorant receptor. This chain is Olfactory receptor 2B6, found in Homo sapiens (Human).